Here is a 344-residue protein sequence, read N- to C-terminus: Holliday junction branch migration complex subunit RuvB (344 aa).

The large ATPase domain (RuvB-L) stretch occupies residues Met-1–Tyr-182. ATP is bound by residues Leu-21, Arg-22, Gly-63, Lys-66, Thr-67, Thr-68, Glu-129–Phe-131, Arg-172, Tyr-182, and Arg-219. A Mg(2+)-binding site is contributed by Thr-67. Residues Asn-183–Glu-253 form a small ATPAse domain (RuvB-S) region. The segment at Pro-256–Phe-344 is head domain (RuvB-H). DNA contacts are provided by Arg-311 and Arg-316.

Belongs to the RuvB family. As to quaternary structure, homohexamer. Forms an RuvA(8)-RuvB(12)-Holliday junction (HJ) complex. HJ DNA is sandwiched between 2 RuvA tetramers; dsDNA enters through RuvA and exits via RuvB. An RuvB hexamer assembles on each DNA strand where it exits the tetramer. Each RuvB hexamer is contacted by two RuvA subunits (via domain III) on 2 adjacent RuvB subunits; this complex drives branch migration. In the full resolvosome a probable DNA-RuvA(4)-RuvB(12)-RuvC(2) complex forms which resolves the HJ.

The protein resides in the cytoplasm. The enzyme catalyses ATP + H2O = ADP + phosphate + H(+). Functionally, the RuvA-RuvB-RuvC complex processes Holliday junction (HJ) DNA during genetic recombination and DNA repair, while the RuvA-RuvB complex plays an important role in the rescue of blocked DNA replication forks via replication fork reversal (RFR). RuvA specifically binds to HJ cruciform DNA, conferring on it an open structure. The RuvB hexamer acts as an ATP-dependent pump, pulling dsDNA into and through the RuvAB complex. RuvB forms 2 homohexamers on either side of HJ DNA bound by 1 or 2 RuvA tetramers; 4 subunits per hexamer contact DNA at a time. Coordinated motions by a converter formed by DNA-disengaged RuvB subunits stimulates ATP hydrolysis and nucleotide exchange. Immobilization of the converter enables RuvB to convert the ATP-contained energy into a lever motion, pulling 2 nucleotides of DNA out of the RuvA tetramer per ATP hydrolyzed, thus driving DNA branch migration. The RuvB motors rotate together with the DNA substrate, which together with the progressing nucleotide cycle form the mechanistic basis for DNA recombination by continuous HJ branch migration. Branch migration allows RuvC to scan DNA until it finds its consensus sequence, where it cleaves and resolves cruciform DNA. The protein is Holliday junction branch migration complex subunit RuvB of Desulforamulus reducens (strain ATCC BAA-1160 / DSM 100696 / MI-1) (Desulfotomaculum reducens).